The chain runs to 367 residues: MDTRAKDPASRPRLLVAASGTGGHIFPALAVAEQLPDWQIEWLGVPDRMEGKLVRERYPLHRVVMSGWQGSPLHRLQALAQLARATLQVRRLLMSGRFDIVLTTGGYIAAPAILAARSLGVPVLLHESNWIPGKVTRWLGRFCQVVALGMAETAEHLPGVAAQVVGTPVRAEFYTPQPFPADLPIPDGDPLIVVMGGSQGARGLNRMVATCAPAWLEAGAWIVHLTGGSEAQDPEARIPSHPRYRPFPFRRDVAALLQRANFAISRAGAMSLAELLTTATPAILIPYPFAAEDHQYQNALAFVGRGGGVVMRESEENLDLLRQTVLTWLAQPQVVAQMAARLQAAAPPNASKVLARLLQEIRQSSAR.

Residues 21-23 (TGG), Asn129, Arg170, Ser198, and Gln295 contribute to the UDP-N-acetyl-alpha-D-glucosamine site.

The protein belongs to the glycosyltransferase 28 family. MurG subfamily.

The protein localises to the cell inner membrane. It carries out the reaction di-trans,octa-cis-undecaprenyl diphospho-N-acetyl-alpha-D-muramoyl-L-alanyl-D-glutamyl-meso-2,6-diaminopimeloyl-D-alanyl-D-alanine + UDP-N-acetyl-alpha-D-glucosamine = di-trans,octa-cis-undecaprenyl diphospho-[N-acetyl-alpha-D-glucosaminyl-(1-&gt;4)]-N-acetyl-alpha-D-muramoyl-L-alanyl-D-glutamyl-meso-2,6-diaminopimeloyl-D-alanyl-D-alanine + UDP + H(+). It functions in the pathway cell wall biogenesis; peptidoglycan biosynthesis. Cell wall formation. Catalyzes the transfer of a GlcNAc subunit on undecaprenyl-pyrophosphoryl-MurNAc-pentapeptide (lipid intermediate I) to form undecaprenyl-pyrophosphoryl-MurNAc-(pentapeptide)GlcNAc (lipid intermediate II). The chain is UDP-N-acetylglucosamine--N-acetylmuramyl-(pentapeptide) pyrophosphoryl-undecaprenol N-acetylglucosamine transferase from Synechococcus sp. (strain JA-2-3B'a(2-13)) (Cyanobacteria bacterium Yellowstone B-Prime).